The sequence spans 270 residues: Probable inner membrane protein BTH_II0599 (270 aa).

The next 6 helical transmembrane spans lie at 24–44 (RNPL…MLVS), 45–65 (LVPV…AVGF), 98–118 (LLTL…CSAL), 150–170 (ALIA…APVL), 198–218 (VYGL…AALM), and 226–246 (YALM…YCSF).

It is found in the cell inner membrane. Functionally, (Microbial infection) Probably transports the toxic C-terminal region of CdiA-2 from B.pseudomallei strain 1026b across the inner membrane to the cytoplasm, where CdiA has a toxic effect. Expression in E.coli makes the bacteria sensitive to the tRNase domain of B.pseudomallei strain 1026b CdiA-2. This Burkholderia thailandensis (strain ATCC 700388 / DSM 13276 / CCUG 48851 / CIP 106301 / E264) protein is Probable inner membrane protein BTH_II0599.